The chain runs to 151 residues: Arginine repressor (151 aa).

This sequence belongs to the ArgR family.

The protein resides in the cytoplasm. The protein operates within amino-acid biosynthesis; L-arginine biosynthesis [regulation]. In terms of biological role, regulates arginine biosynthesis genes. This is Arginine repressor from Enterococcus faecalis (strain ATCC 700802 / V583).